Consider the following 1288-residue polypeptide: Contactin-associated protein-like 3 (1288 aa).

The N-terminal stretch at 1 to 25 (MASVAWAVLKVLLLLPTQTWSPVGA) is a signal peptide. Residues 26–1245 (GNPPDCDAPL…LVNADRRDSA (1220 aa)) lie on the Extracellular side of the membrane. Residues 31 to 177 (CDAPLASALP…IGMRIEVYGC (147 aa)) form the F5/8 type C domain. C31 and C177 are joined by a disulfide. Laminin G-like domains follow at residues 183–364 (VVYF…SFSC) and 370–545 (VPVT…IDSC). N-linked (GlcNAc...) asparagine glycosylation is found at N285, N359, N441, and N497. A disulfide bridge connects residues C332 and C364. 4 cysteine pairs are disulfide-bonded: C513/C545, C551/C562, C556/C571, and C573/C583. In terms of domain architecture, EGF-like 1 spans 551-583 (CLPSYCEHGGECSQSWDTFSCDCLGTGYTGETC). The 209-residue stretch at 584 to 792 (HSSLYEQSCE…LLCRGDQSFW (209 aa)) folds into the Fibrinogen C-terminal domain. 2 N-linked (GlcNAc...) asparagine glycosylation sites follow: N623 and N706. One can recognise a Laminin G-like 3 domain in the interval 793–958 (NSASFNTETS…TVTPGVEPGC (166 aa)). Intrachain disulfides connect C931–C958, C962–C975, C969–C984, and C986–C996. The 35-residue stretch at 962–996 (CSTYGHLCRNGGRCREKRRGVTCDCAFSAYDGPFC) folds into the EGF-like 2 domain. Positions 1015–1203 (QEHYTLSENS…RGHVAPMARC (189 aa)) constitute a Laminin G-like 4 domain. 3 N-linked (GlcNAc...) asparagine glycosylation sites follow: N1023, N1073, and N1120. An intrachain disulfide couples C1167 to C1203. The segment at 1215–1236 (ELAPRLAGGAGRSGPADEGEPL) is disordered. The chain crosses the membrane as a helical span at residues 1246 to 1266 (VIGGVIAVVIFILLCITAIAI). Residues 1267-1288 (RIYQQRKLRKENESKVSKKEEC) are Cytoplasmic-facing.

This sequence belongs to the neurexin family.

It is found in the cell membrane. The protein localises to the secreted. This chain is Contactin-associated protein-like 3 (CNTNAP3), found in Homo sapiens (Human).